We begin with the raw amino-acid sequence, 71 residues long: Large ribosomal subunit protein bL31 (71 aa).

Zn(2+) contacts are provided by Cys16, Cys18, Cys37, and Cys40.

This sequence belongs to the bacterial ribosomal protein bL31 family. Type A subfamily. Part of the 50S ribosomal subunit. Requires Zn(2+) as cofactor.

Functionally, binds the 23S rRNA. The polypeptide is Large ribosomal subunit protein bL31 (Yersinia pseudotuberculosis serotype O:1b (strain IP 31758)).